The chain runs to 300 residues: 33 kDa chaperonin (300 aa).

Intrachain disulfides connect Cys240/Cys242 and Cys273/Cys276.

Belongs to the HSP33 family. In terms of processing, under oxidizing conditions two disulfide bonds are formed involving the reactive cysteines. Under reducing conditions zinc is bound to the reactive cysteines and the protein is inactive.

Its subcellular location is the cytoplasm. Redox regulated molecular chaperone. Protects both thermally unfolding and oxidatively damaged proteins from irreversible aggregation. Plays an important role in the bacterial defense system toward oxidative stress. This chain is 33 kDa chaperonin, found in Cyanothece sp. (strain PCC 7425 / ATCC 29141).